We begin with the raw amino-acid sequence, 249 residues long: FMN reductase [NAD(P)H] (249 aa).

Residues 11 to 15, Q67, 134 to 136, and 173 to 175 contribute to the FMN site; these read HRSIR, PIG, and KPR.

It belongs to the flavin oxidoreductase frp family. As to quaternary structure, homodimer.

It carries out the reaction FMNH2 + NADP(+) = FMN + NADPH + 2 H(+). It catalyses the reaction FMNH2 + NAD(+) = FMN + NADH + 2 H(+). FMN is a competitive inhibitor of NADH, and therefore leads to the preferential utilization of NADPH. Functionally, reduces FMNH(2) to FMN, with NADH or NADPH as reductant. It also reduces nitroaromatic compounds, quinones, chromates and azo dyes. It could supply the reduced form of FMN to luciferase-like protein and contribute to the degradation of aromatic compounds. The chain is FMN reductase [NAD(P)H] (nfrA2) from Bacillus subtilis (strain 168).